A 282-amino-acid chain; its full sequence is Cyclic AMP-dependent transcription factor ATF-5 (282 aa).

Residues 1 to 21 (MSLLATLGLELDRALLPASGL) are required for protein stabilization induced by IL1B. Lys29 is modified (N6-acetyllysine; by EP300). Disordered regions lie at residues 116–152 (FLDA…DLPQ) and 173–238 (EEVG…ALEG). The segment at 119–217 (APPLPPPSPP…GDRKQKKRDQ (99 aa)) is interaction with PTP4A1. A compositionally biased stretch (pro residues) spans 120–140 (PPLPPPSPPPLPPPPLPPAPS). Low complexity predominate over residues 141-150 (LPLSLPSFDL). The span at 178–194 (PPLPPPQQPPPPSPPQP) shows a compositional bias: pro residues. One can recognise a bZIP domain in the interval 208 to 271 (GDRKQKKRDQ…QYVKDLLIEV (64 aa)). The interval 210–230 (RKQKKRDQNKSAALRYRQRKR) is basic motif. A leucine-zipper region spans residues 236–250 (LEGECQGLEARNREL). Ser256 is modified (phosphoserine).

This sequence belongs to the bZIP family. As to quaternary structure, binds DNA as a dimer. Interacts with PTP4A1/PRL-1. Interacts with CCND3, but not with CCND1 or CCND2. Interacts with HSPA1A or HSPA1B; the interaction protects ATF5 from degradation via proteasome-dependent and caspase-dependent processes. Interacts (via C-terminal region) with NPM1 (via C-terminal region); the interaction leads to loss of association between HSPA1A or HSPA1B and ATF5 and promotes ATF5 degradation via proteasome-dependent and caspase-dependent processes. Interacts with NLK; the interaction stabilizes ATF5 at the protein level in a kinase-independent manner. Interacts with alpha-tubulin, gamma-tubulin members TUBGCP2 and TUBGCP4, PCNT; the ATF5:PCNT:polyglutamylated tubulin (PGT) tripartite unites the mother centriole and the pericentriolar material (PCM) in the centrosome. Interacts with CEBPB and EP300; EP300 is required for ATF5 and CEBPB interaction and DNA binding. Post-translationally, ubiquitinated by CDC34 and UBE2B in order to be degraded by the proteasome. Cisplatin inhibits ubiquitination and proteasome-mediated degradation by inhibiting the interaction with CDC34. Ubiquitination and degradation by the proteasome are inhibited by NLK in a kinase-independent manner. Phosphorylated by NLK, probably at Ser-92, Thr-94, Ser-126 and Ser-190. In terms of processing, acetylated at Lys-29 by EP300, the acetylation enhances the interaction with CEBPB, DNA-binding and transactivation activity. As to expression, widely expressed with higher expression levels in liver.

The protein resides in the cytoplasm. Its subcellular location is the nucleus. It is found in the cytoskeleton. The protein localises to the microtubule organizing center. It localises to the centrosome. In terms of biological role, transcription factor that either stimulates or represses gene transcription through binding of different DNA regulatory elements such as cAMP response element (CRE) (consensus: 5'-GTGACGT[AC][AG]-3'), ATF5-specific response element (ARE) (consensus: 5'-C[CT]TCT[CT]CCTT[AT]-3') but also the amino acid response element (AARE), present in many viral and cellular promoters. Critically involved, often in a cell type-dependent manner, in cell survival, proliferation, and differentiation. Its transcriptional activity is enhanced by CCND3 and slightly inhibited by CDK4. Important regulator of the cerebral cortex formation, functions in cerebral cortical neuroprogenitor cells to maintain proliferation and to block differentiation into neurons. Must be down-regulated in order for such cells to exit the cycle and differentiate. Participates in the pathways by which SHH promotes cerebellar granule neuron progenitor cells proliferation. Critical for survival of mature olfactory sensory neurons (OSN), directs expression of OSN-specific genes. May be involved in osteogenic differentiation. Promotes cell proliferation and survival by inducing the expression of EGR1 sinergistically with ELK1. Once acetylated by EP300, binds to ARE sequences on target genes promoters, such as BCL2 and EGR1. Plays an anti-apoptotic role through the transcriptional regulation of BCL2, this function seems to be cell type-dependent. Cooperates with NR1I3/CAR in the transcriptional activation of CYP2B6 in liver. In hepatic cells, represses CRE-dependent transcription and inhibits proliferation by blocking at G2/M phase. May act as a negative regulator of IL1B transduction pathway in liver. Upon IL1B stimulus, cooperates with NLK to activate the transactivation activity of C/EBP subfamily members. Besides its function of transcription factor, acts as a cofactor of CEBPB to activate CEBPA and promote adipocyte differentiation. Regulates centrosome dynamics in a cell-cycle- and centriole-age-dependent manner. Forms 9-foci symmetrical ring scaffold around the mother centriole to control centrosome function and the interaction between centrioles and pericentriolar material. The polypeptide is Cyclic AMP-dependent transcription factor ATF-5 (ATF5) (Homo sapiens (Human)).